A 373-amino-acid chain; its full sequence is Response regulator aspartate phosphatase J (373 aa).

2 TPR repeats span residues 99-135 (YYFY…VEDE) and 146-179 (AEVY…GRRR). 11 residues coordinate L-glutamyl-L-arginyl-glycyl-L-methionyl-L-threonine: Glu-147, Tyr-150, Gln-181, Asp-192, Tyr-217, Asn-225, His-228, Gln-260, Tyr-297, Lys-300, and Asp-335. TPR repeat units lie at residues 220 to 253 (AAAY…FEEH) and 259 to 292 (VQAV…AAEW). The stretch at 334–367 (EDLLHDTAERFNQLEHYESAAFFYRRLMNIKKKL) is one TPR 5 repeat.

It belongs to the Rap family. As to quaternary structure, monomer in solution. Homodimer.

It localises to the cytoplasm. Its activity is regulated as follows. Inhibited in vitro by the competence and sporulation stimulating factor (CSF), encoded by phrC. However, CSF has at least three targets (RapB, RapC, and RapJ) and the physiological importance of RapJ inhibition by CSF is unknown. Interaction with CSF induces a conformational change in RapJ. Functionally, involved in the regulation of sporulation. Acts as a phosphatase that specifically dephosphorylates the sporulation initiation phosphotransferase Spo0F and inhibits its activity. This is Response regulator aspartate phosphatase J (rapJ) from Bacillus subtilis (strain 168).